Here is a 290-residue protein sequence, read N- to C-terminus: Bifunctional protein FolD (290 aa).

Residues 174-176 (GHS), I199, and I240 each bind NADP(+).

It belongs to the tetrahydrofolate dehydrogenase/cyclohydrolase family. As to quaternary structure, homodimer.

It carries out the reaction (6R)-5,10-methylene-5,6,7,8-tetrahydrofolate + NADP(+) = (6R)-5,10-methenyltetrahydrofolate + NADPH. The catalysed reaction is (6R)-5,10-methenyltetrahydrofolate + H2O = (6R)-10-formyltetrahydrofolate + H(+). The protein operates within one-carbon metabolism; tetrahydrofolate interconversion. In terms of biological role, catalyzes the oxidation of 5,10-methylenetetrahydrofolate to 5,10-methenyltetrahydrofolate and then the hydrolysis of 5,10-methenyltetrahydrofolate to 10-formyltetrahydrofolate. This is Bifunctional protein FolD from Methanosarcina acetivorans (strain ATCC 35395 / DSM 2834 / JCM 12185 / C2A).